The sequence spans 87 residues: Small ribosomal subunit protein bS20 (87 aa).

Residues 1–22 (MANIKSQIKRIGTNKKAQERNK) form a disordered region.

The protein belongs to the bacterial ribosomal protein bS20 family.

Functionally, binds directly to 16S ribosomal RNA. The chain is Small ribosomal subunit protein bS20 from Clavibacter michiganensis subsp. michiganensis (strain NCPPB 382).